The following is a 140-amino-acid chain: Large ribosomal subunit protein bL17 (140 aa).

It belongs to the bacterial ribosomal protein bL17 family. In terms of assembly, part of the 50S ribosomal subunit. Contacts protein L32.

The chain is Large ribosomal subunit protein bL17 from Roseobacter denitrificans (strain ATCC 33942 / OCh 114) (Erythrobacter sp. (strain OCh 114)).